The following is a 407-amino-acid chain: Tyrosine--tRNA ligase (407 aa).

Residue Tyr35 coordinates L-tyrosine. The 'HIGH' region signature appears at 40–49; sequence PTADSLHVGH. L-tyrosine is bound by residues Tyr168 and Gln172. Positions 228–232 match the 'KMSKS' region motif; sequence KMGKT. Lys231 contributes to the ATP binding site. Positions 341–405 constitute an S4 RNA-binding domain; sequence NLLVDLLVKC…RGKKNFNRIV (65 aa).

Belongs to the class-I aminoacyl-tRNA synthetase family. TyrS type 1 subfamily. Homodimer.

It is found in the cytoplasm. The enzyme catalyses tRNA(Tyr) + L-tyrosine + ATP = L-tyrosyl-tRNA(Tyr) + AMP + diphosphate + H(+). Its function is as follows. Catalyzes the attachment of tyrosine to tRNA(Tyr) in a two-step reaction: tyrosine is first activated by ATP to form Tyr-AMP and then transferred to the acceptor end of tRNA(Tyr). This Clostridium botulinum (strain Kyoto / Type A2) protein is Tyrosine--tRNA ligase.